The sequence spans 603 residues: Glutathione-regulated potassium-efflux system protein KefB (603 aa).

13 helical membrane passes run 5–25 (ALLT…PIAA), 29–49 (IGAV…GLGF), 53–73 (VEAI…IIGL), 87–107 (IFGV…GALY), 115–135 (SALI…LQLM), 152–172 (VLLF…ILAG), 180–202 (WERI…YLVR), 207–227 (FIAA…LVLG), 230–250 (LFME…GILL), 268–288 (GLLL…GILY), 291–311 (IVKI…VLYF), 326–346 (FAGV…AAAS), and 356–376 (PLLL…MQVI). One can recognise an RCK N-terminal domain in the interval 400-521 (EPQVIVVGFG…VRHFSRETFS (122 aa)).

Belongs to the monovalent cation:proton antiporter 2 (CPA2) transporter (TC 2.A.37) family. KefB subfamily. Interacts with the regulatory subunit KefG.

The protein localises to the cell inner membrane. Pore-forming subunit of a potassium efflux system that confers protection against electrophiles. Catalyzes K(+)/H(+) antiport. In Pectobacterium atrosepticum (strain SCRI 1043 / ATCC BAA-672) (Erwinia carotovora subsp. atroseptica), this protein is Glutathione-regulated potassium-efflux system protein KefB.